The sequence spans 396 residues: UPF0164 protein TP_0858 (396 aa).

The signal sequence occupies residues 1–28 (MGTMIRHTFTHRCGALLCALALGSSTMA).

This sequence belongs to the UPF0164 family.

The polypeptide is UPF0164 protein TP_0858 (Treponema pallidum (strain Nichols)).